Here is a 240-residue protein sequence, read N- to C-terminus: Diglucosylglycerate octanoyltransferase (240 aa).

This sequence belongs to the OctT acyltransferase family. Homotetramer.

It catalyses the reaction (2R)-2-O-[alpha-D-glucopyranosyl-(1-&gt;6)-alpha-D-glucopyranosyl]-glycerate + octanoyl-CoA = (2R)-2-O-[6-O-octanoyl-alpha-D-glucopyranosyl-(1-&gt;6)-alpha-D-glucopyranosyl]-glycerate + CoA. Sugar octanoyltransferase likely involved in the biosynthesis of mycobacterial methylglucose lipopolysaccharide (MGLP). Catalyzes the transfer of an octanoyl group from octanoyl-CoA to the C6 OH of the second glucose in diglucosylglycerate (DGG). Can also use hexanoyl-CoA as acyl donor in vitro. DGG is the preferred acceptor, but to a lesser extent, GG (glucosylglycerate) can be used as substrate. DGG and GG are the two earliest intermediates in MGLP biosynthesis. The sequence is that of Diglucosylglycerate octanoyltransferase from Mycolicibacterium hassiacum (strain DSM 44199 / CIP 105218 / JCM 12690 / 3849) (Mycobacterium hassiacum).